The following is a 145-amino-acid chain: Large ribosomal subunit protein eL32 (145 aa).

It belongs to the eukaryotic ribosomal protein eL32 family.

This chain is Large ribosomal subunit protein eL32 (rpl32e), found in Aeropyrum pernix (strain ATCC 700893 / DSM 11879 / JCM 9820 / NBRC 100138 / K1).